The sequence spans 332 residues: 2,3-diketo-L-gulonate reductase (332 aa).

The Proton donor role is filled by H44. NAD(+) contacts are provided by residues 168–174 (ITMVDMS), 224–225 (WK), and 304–306 (GHE).

This sequence belongs to the LDH2/MDH2 oxidoreductase family. DlgD subfamily. As to quaternary structure, homodimer.

Its subcellular location is the cytoplasm. It catalyses the reaction 3-dehydro-L-gulonate + NAD(+) = 2,3-dioxo-L-gulonate + NADH + H(+). It carries out the reaction 3-dehydro-L-gulonate + NADP(+) = 2,3-dioxo-L-gulonate + NADPH + H(+). In terms of biological role, catalyzes the reduction of 2,3-diketo-L-gulonate in the presence of NADH, to form 3-keto-L-gulonate. This is 2,3-diketo-L-gulonate reductase from Salmonella heidelberg (strain SL476).